The sequence spans 309 residues: Nudix hydrolase 14, chloroplastic (309 aa).

The transit peptide at 1 to 60 directs the protein to the chloroplast; the sequence is MAGFTLLPSRLLAFPSRALPRRLHHHHAKLILRCKMSSSSSSLTQSITLPSQPNEPVLVS. Positions 139–292 constitute a Nudix hydrolase domain; it reads ARGPAVAVLI…KVLMSIGLYE (154 aa). The Nudix box signature appears at 179 to 200; it reads MLDDDKGDFVGTAVREVEEEIG. Mg(2+) contacts are provided by E194 and E198.

The protein belongs to the Nudix hydrolase family. In terms of assembly, homodimer. It depends on Mg(2+) as a cofactor. Requires Mn(2+) as cofactor. As to expression, expressed in roots, leaves, stems and inflorescences.

It localises to the plastid. Its subcellular location is the chloroplast. It catalyses the reaction ADP-sugar + H2O = AMP + alpha-D-aldose 1-phosphate.. Mediates the hydrolysis of some nucleoside diphosphate derivatives. Can use ADP-glucose, ADP-mannose and ADP-ribose as substrates. Regulates the intracellular ADP-glucose levels linked to starch biosynthesis. In Arabidopsis thaliana (Mouse-ear cress), this protein is Nudix hydrolase 14, chloroplastic (NUDT14).